A 286-amino-acid chain; its full sequence is MKKNKNINFKPKWLRVKSPDKYNNIYKISNYNNLNTICKSGSCPNIAECWEQGVATFMILGNICTRSCKFCGVKTGKPNKIDFYEPKKIAHNIKIMKIKHAVITSVDRDDLKDMGAIIWGKTIKAIKNINEKISLETLIPDFKGRKDLINIIVNEKPEVISHNIETVRRLTKKVRTQAKYDRSINVLKYIKLISNIRTKTGIMLGLGETEEEVIQTLKDSRNANIDIITIGQYLSPSIKHFYVKKFIPPYIFKKYENIALDMGFLYVESGPLVRSSYNAYKHIFLK.

[4Fe-4S] cluster is bound by residues Cys38, Cys43, Cys49, Cys64, Cys68, Cys71, and Ser276. The 216-residue stretch at 50–265 (WEQGVATFMI…ENIALDMGFL (216 aa)) folds into the Radical SAM core domain.

Belongs to the radical SAM superfamily. Lipoyl synthase family. Requires [4Fe-4S] cluster as cofactor.

Its subcellular location is the cytoplasm. It carries out the reaction [[Fe-S] cluster scaffold protein carrying a second [4Fe-4S](2+) cluster] + N(6)-octanoyl-L-lysyl-[protein] + 2 oxidized [2Fe-2S]-[ferredoxin] + 2 S-adenosyl-L-methionine + 4 H(+) = [[Fe-S] cluster scaffold protein] + N(6)-[(R)-dihydrolipoyl]-L-lysyl-[protein] + 4 Fe(3+) + 2 hydrogen sulfide + 2 5'-deoxyadenosine + 2 L-methionine + 2 reduced [2Fe-2S]-[ferredoxin]. It functions in the pathway protein modification; protein lipoylation via endogenous pathway; protein N(6)-(lipoyl)lysine from octanoyl-[acyl-carrier-protein]: step 2/2. Its function is as follows. Catalyzes the radical-mediated insertion of two sulfur atoms into the C-6 and C-8 positions of the octanoyl moiety bound to the lipoyl domains of lipoate-dependent enzymes, thereby converting the octanoylated domains into lipoylated derivatives. The protein is Lipoyl synthase of Karelsulcia muelleri (strain GWSS) (Sulcia muelleri).